The sequence spans 100 residues: Histone H3-like 2 (100 aa).

Residues 1-46 form a disordered region; it reads MARMKHTARMSTGGKAPRKQLASKALRKAPPPPTKGVKQPTTTTSG.

It belongs to the histone H3 family. As to quaternary structure, the nucleosome is a histone octamer containing two molecules each of H2A, H2B, H3 and H4 assembled in one H3-H4 heterotetramer and two H2A-H2B heterodimers. The octamer wraps approximately 147 bp of DNA. In terms of tissue distribution, pollen specific.

The protein localises to the nucleus. It localises to the chromosome. Functionally, core component of nucleosome. Nucleosomes wrap and compact DNA into chromatin, limiting DNA accessibility to the cellular machineries which require DNA as a template. Histones thereby play a central role in transcription regulation, DNA repair, DNA replication and chromosomal stability. DNA accessibility is regulated via a complex set of post-translational modifications of histones, also called histone code, and nucleosome remodeling. The sequence is that of Histone H3-like 2 (gcH3) from Lilium longiflorum (Trumpet lily).